The following is a 487-amino-acid chain: GTPase Der (487 aa).

EngA-type G domains follow at residues 3–167 (LTLA…DEME) and 203–378 (LQVA…EVWN). GTP-binding positions include 9–16 (GRPNVGKS), 56–60 (DTAGL), and 119–122 (NKAE). Positions 167 to 190 (EQQAEEQAPETDVDLDPEDEDGEE) are enriched in acidic residues. The disordered stretch occupies residues 167-191 (EQQAEEQAPETDVDLDPEDEDGEEV). GTP contacts are provided by residues 209-216 (GRPNAGKS), 256-260 (DTAGM), and 321-324 (NKWD). Residues 379 to 465 (RRIPTAALNR…RLTLRGQGDK (87 aa)) enclose the KH-like domain. The interval 458 to 487 (TLRGQGDKNPYKGRRKKNAGALAKHLKSRG) is disordered. Residues 468-487 (YKGRRKKNAGALAKHLKSRG) show a composition bias toward basic residues.

This sequence belongs to the TRAFAC class TrmE-Era-EngA-EngB-Septin-like GTPase superfamily. EngA (Der) GTPase family. As to quaternary structure, associates with the 50S ribosomal subunit.

In terms of biological role, GTPase that plays an essential role in the late steps of ribosome biogenesis. In Ruegeria pomeroyi (strain ATCC 700808 / DSM 15171 / DSS-3) (Silicibacter pomeroyi), this protein is GTPase Der.